Consider the following 206-residue polypeptide: Large ribosomal subunit protein uL4 (206 aa).

The interval 63 to 98 is disordered; the sequence is MYRQKGTGRARHSSARAPQFRGGGKAHGPVPHSHAH. A compositionally biased stretch (basic residues) spans 64 to 76; the sequence is YRQKGTGRARHSS.

This sequence belongs to the universal ribosomal protein uL4 family. In terms of assembly, part of the 50S ribosomal subunit.

One of the primary rRNA binding proteins, this protein initially binds near the 5'-end of the 23S rRNA. It is important during the early stages of 50S assembly. It makes multiple contacts with different domains of the 23S rRNA in the assembled 50S subunit and ribosome. Functionally, forms part of the polypeptide exit tunnel. The chain is Large ribosomal subunit protein uL4 from Chelativorans sp. (strain BNC1).